Here is a 666-residue protein sequence, read N- to C-terminus: DNA mismatch repair protein MutL (666 aa).

This sequence belongs to the DNA mismatch repair MutL/HexB family.

Its function is as follows. This protein is involved in the repair of mismatches in DNA. It is required for dam-dependent methyl-directed DNA mismatch repair. May act as a 'molecular matchmaker', a protein that promotes the formation of a stable complex between two or more DNA-binding proteins in an ATP-dependent manner without itself being part of a final effector complex. The protein is DNA mismatch repair protein MutL of Clostridium botulinum (strain Kyoto / Type A2).